We begin with the raw amino-acid sequence, 269 residues long: Indole-3-glycerol phosphate synthase (269 aa).

Belongs to the TrpC family.

It carries out the reaction 1-(2-carboxyphenylamino)-1-deoxy-D-ribulose 5-phosphate + H(+) = (1S,2R)-1-C-(indol-3-yl)glycerol 3-phosphate + CO2 + H2O. It participates in amino-acid biosynthesis; L-tryptophan biosynthesis; L-tryptophan from chorismate: step 4/5. This Saccharopolyspora erythraea (strain ATCC 11635 / DSM 40517 / JCM 4748 / NBRC 13426 / NCIMB 8594 / NRRL 2338) protein is Indole-3-glycerol phosphate synthase.